Reading from the N-terminus, the 95-residue chain is Small ribosomal subunit protein uS17 (95 aa).

It belongs to the universal ribosomal protein uS17 family. In terms of assembly, part of the 30S ribosomal subunit.

Functionally, one of the primary rRNA binding proteins, it binds specifically to the 5'-end of 16S ribosomal RNA. The polypeptide is Small ribosomal subunit protein uS17 (Mycoplasmopsis synoviae (strain 53) (Mycoplasma synoviae)).